The primary structure comprises 345 residues: Phosphate acyltransferase (345 aa).

Belongs to the PlsX family. Homodimer. Probably interacts with PlsY.

Its subcellular location is the cytoplasm. The enzyme catalyses a fatty acyl-[ACP] + phosphate = an acyl phosphate + holo-[ACP]. Its pathway is lipid metabolism; phospholipid metabolism. Its function is as follows. Catalyzes the reversible formation of acyl-phosphate (acyl-PO(4)) from acyl-[acyl-carrier-protein] (acyl-ACP). This enzyme utilizes acyl-ACP as fatty acyl donor, but not acyl-CoA. This is Phosphate acyltransferase from Levilactobacillus brevis (strain ATCC 367 / BCRC 12310 / CIP 105137 / JCM 1170 / LMG 11437 / NCIMB 947 / NCTC 947) (Lactobacillus brevis).